The sequence spans 108 residues: MTAHILLLWLFASSILGDPDSAGRLTRHQVSLKSGRLCSLGTCQTHRLPEIIYWLRSASTKELSGKAGRKPQDPYSYGRRRRRRRRRREARLLRRLQDPSLRRAQLAG.

A signal peptide spans 1-18 (MTAHILLLWLFASSILGD). The propeptide occupies 19-25 (PDSAGRL). A disulfide bridge links cysteine 38 with cysteine 43. Positions 61–108 (KELSGKAGRKPQDPYSYGRRRRRRRRRREARLLRRLQDPSLRRAQLAG) are disordered. Tyrosine 77 is modified (tyrosine amide). The segment covering 78 to 89 (GRRRRRRRRRRE) has biased composition (basic residues). The propeptide occupies 89 to 108 (EARLLRRLQDPSLRRAQLAG). A compositionally biased stretch (basic and acidic residues) spans 90–101 (ARLLRRLQDPSL).

This sequence belongs to the adrenomedullin family. As to expression, expressed abundantly in the spleen and thymus. Also expressed in adrenal and pituitary. Not expressed in brain, heart, kidney, liver and stomach.

The protein resides in the secreted. Functionally, seems to have a peripheral vasodepressor effect and a central vasopressor effect. The polypeptide is ADM5 (ADM5) (Sus scrofa (Pig)).